Consider the following 650-residue polypeptide: MSEKIYDVPAEWAKRAFVDDAKYQEMYASSIRDPNGFWAEQAKRVDWIHAPTKIENVSYAPGNISIKWFEDGVLNAAYNCIDRHLATRADQTAIIWEGDDPADSKHITYRQLHDEVCKMANILRNRNVKKGDRVTIYLPMIPEAAYAMLACARIGAIHSVVFAGFSPDSLAQRIKDCDSKVVITADEGLRGGRKVPLKANVDAALNKVDNVDWVVVVKRTGGKIEMNPTRDLWYHEAAEMVTTECPVEHMNAEDALFILYTSGSTGQPKGVLHTTGGYLVYASMTHQYVFDYHEGDVYWCTADVGWVTGHSYILYGPLANGAVTLMFEGVPNYPDNSRFWNVIDKHKVNIFYTAPTAIRALMQGGDGPVTKTSRESLRLLGSVGEPINPEAWEWYHRVVGDNRCPIVDTWWQTETGGILITPLPGATRLKPGSATRPFFGVVPEIVDADGNTLEGATEGNLCLTRSWPGQMRTVYGDHARFEMTYFSTYKGKYFTGDGCRRDADGYYWITGRVDDVINVSGHRMGTAEVESALVAHPKVSEAAVVGYPHDIKGQGIYAYVTLMAGETPSEELRKELVGWVRKEIGPIASPDQIQFSQGLPKTRSGKIMRRILRKIAEDEPGALGDTSTLADPAVVDDLVQHRQNRKEKQA.

Residues 190 to 193, Thr-308, and Asn-332 contribute to the CoA site; that span reads RGGR. ATP contacts are provided by residues 384 to 386, 408 to 413, Asp-497, and Arg-512; these read GEP and DTWWQT. Residue Ser-520 coordinates CoA. Arg-523 is a binding site for ATP. Residues Val-534, His-536, and Val-539 each coordinate Mg(2+). Arg-581 contacts CoA. Lys-606 carries the post-translational modification N6-acetyllysine.

This sequence belongs to the ATP-dependent AMP-binding enzyme family. Mg(2+) is required as a cofactor. Acetylated. Deacetylation by the SIR2-homolog deacetylase activates the enzyme.

The enzyme catalyses acetate + ATP + CoA = acetyl-CoA + AMP + diphosphate. In terms of biological role, catalyzes the conversion of acetate into acetyl-CoA (AcCoA), an essential intermediate at the junction of anabolic and catabolic pathways. AcsA undergoes a two-step reaction. In the first half reaction, AcsA combines acetate with ATP to form acetyl-adenylate (AcAMP) intermediate. In the second half reaction, it can then transfer the acetyl group from AcAMP to the sulfhydryl group of CoA, forming the product AcCoA. The chain is Acetyl-coenzyme A synthetase from Bradyrhizobium sp. (strain ORS 278).